The sequence spans 81 residues: Costars family protein ABRACL (81 aa).

The protein belongs to the costars family.

The polypeptide is Costars family protein ABRACL (abracl) (Xenopus laevis (African clawed frog)).